Reading from the N-terminus, the 481-residue chain is Rho GTPase-activating protein 15 (481 aa).

S51, S111, S204, S207, and S249 each carry phosphoserine. Residues 87-197 form the PH domain; the sequence is MVEKEGYLQK…WFQAIKNAID (111 aa). A Rho-GAP domain is found at 287–476; it reads SHLHTVCERE…FMLTEYDKIF (190 aa).

The protein resides in the cytoplasm. It localises to the membrane. Its function is as follows. GTPase activator for the Rho-type GTPases by converting them to an inactive GDP-bound state. Has activity toward RAC1. Overexpression results in an increase in actin stress fibers and cell contraction. The polypeptide is Rho GTPase-activating protein 15 (Arhgap15) (Mus musculus (Mouse)).